Consider the following 899-residue polypeptide: Alanine--tRNA ligase, chloroplastic/mitochondrial (899 aa).

Residues histidine 581, histidine 585, cysteine 683, and histidine 687 each coordinate Zn(2+).

Belongs to the class-II aminoacyl-tRNA synthetase family. Monomer. The cofactor is Zn(2+).

It is found in the plastid. Its subcellular location is the chloroplast. The protein localises to the mitochondrion. The enzyme catalyses tRNA(Ala) + L-alanine + ATP = L-alanyl-tRNA(Ala) + AMP + diphosphate. Its function is as follows. Catalyzes the attachment of alanine to tRNA(Ala) in a two-step reaction: alanine is first activated by ATP to form Ala-AMP and then transferred to the acceptor end of tRNA(Ala). Also edits incorrectly charged tRNA(Ala) via its editing domain. This is Alanine--tRNA ligase, chloroplastic/mitochondrial from Micromonas pusilla (strain CCMP1545) (Picoplanktonic green alga).